The sequence spans 340 residues: Ferrochelatase (340 aa).

2 residues coordinate Fe cation: His189 and Glu292.

Belongs to the ferrochelatase family.

It is found in the cytoplasm. The catalysed reaction is heme b + 2 H(+) = protoporphyrin IX + Fe(2+). Its pathway is porphyrin-containing compound metabolism; protoheme biosynthesis; protoheme from protoporphyrin-IX: step 1/1. Functionally, catalyzes the ferrous insertion into protoporphyrin IX. The polypeptide is Ferrochelatase (Ectopseudomonas mendocina (strain ymp) (Pseudomonas mendocina)).